The chain runs to 491 residues: MAAVDVNQTITGHKSAIIRNYTTNPRLIYQTVSGVNGPLVILNDVKFPQFSEIVKITLPDGSQRSGQVLEIAKNKAVVQVFEGTSGIDAKNTICEFTGDILRTPVSEDMLGRIFNGSGKPIDKGPPVLAEDFLDINGQPINPWSRIYPEEMIQTGISAIDVMNSIARGQKIPIFSAAGLPHNEIAAQIVRQGGLVQLPDRPHEQTNFAIVFAAMGVNMETARFFKQDFEENGSMENVCLFLNLANDPTIERIITPRIALTAAEFLAYQCSKHVLVVLTDMSSYAEALREVSAAREEVPGRRGFPGYMYTDLATIYERAGRVEGRDGSITQIPILTMPNDDITHPIPDLTGYITEGQIYVDRQLHNRLIYPPINVLPSLSRLMKSAIGDKMTREDHSDVSNQLYACYAIGKDVQAMKAVVGEEALSSDDLLYLEFLVKFEKNFISQGHYENRTIFESLDIGWELLRIFPREMLKRIPAKSLDKYYPRGGAKE.

ATP is bound at residue Arg380.

The protein belongs to the ATPase alpha/beta chains family. V-ATPase is a heteromultimeric enzyme made up of two complexes: the ATP-hydrolytic V1 complex and the proton translocation V0 complex. The V1 complex consists of three catalytic AB heterodimers that form a heterohexamer, three peripheral stalks each consisting of EG heterodimers, one central rotor including subunits D and F, and the regulatory subunits C and H. The proton translocation complex V0 consists of the proton transport subunit a, a ring of proteolipid subunits c9c'', rotary subunit d, subunits e and f, and the accessory subunits vah-19/Ac45 and vah-20/PRR.

In terms of biological role, non-catalytic subunit of the V1 complex of vacuolar(H+)-ATPase (V-ATPase), a multisubunit enzyme composed of a peripheral complex (V1) that hydrolyzes ATP and a membrane integral complex (V0) that translocates protons. V-ATPase is responsible for acidifying and maintaining the pH of intracellular compartments and in some cell types, is targeted to the plasma membrane, where it is responsible for acidifying the extracellular environment. Essential for the proper assembly and activity of V-ATPase. Required maternally for early embryogenesis and zygotically during morphogenesis. Specifically, involved in the clearance of apoptotic cell corpses in embryos. Also, during embryonic development, the V-ATPase is required to repress fusion of epidermal cells probably by negatively regulating eff-1-mediated cell fusion. In neurons, required for necrotic cell death by promoting intracellular acidification. Required for cell death induced by hypoxia. Required for acidification of synaptic vesicles and the release of neurotransmitters from adult neurons. This is Probable V-type proton ATPase subunit B 1 from Caenorhabditis briggsae.